Reading from the N-terminus, the 491-residue chain is NADH-quinone oxidoreductase subunit N (491 aa).

The next 14 helical transmembrane spans lie at 6-26, 37-57, 69-89, 103-123, 128-148, 163-183, 206-226, 238-258, 273-293, 301-321, 335-355, 379-399, 413-433, and 458-478; these read TLAPVAPIIFLAIAIAAINWI, VAYPLSLLTTLVLTAWFGMNA, LVVIDPMANVLSAFCAAGLFV, MFAGEFYMLALFTLGGQIVMI, FLTLYLGLELLSLSSYALVAL, FVLGALASGFLLYGISMMYGA, LAFGVVFIVAGLSFKLGAAPF, PTAVTLLIAGGPKVAAFALFI, QMMLVVLSIISLAIGNLTAIV, LAYSTISHMGFVLLGLLSGVV, AMFYSVTYLLTTLGTFGIILL, FAFLMLVMMFSLAGIPPTVGF, GMTWLAVVAVLFSLIGAFYYL, and SMLSVNGAAVILLGLFPAALM.

This sequence belongs to the complex I subunit 2 family. In terms of assembly, NDH-1 is composed of 14 different subunits. Subunits NuoA, H, J, K, L, M, N constitute the membrane sector of the complex.

Its subcellular location is the cell inner membrane. It catalyses the reaction a quinone + NADH + 5 H(+)(in) = a quinol + NAD(+) + 4 H(+)(out). In terms of biological role, NDH-1 shuttles electrons from NADH, via FMN and iron-sulfur (Fe-S) centers, to quinones in the respiratory chain. The immediate electron acceptor for the enzyme in this species is believed to be ubiquinone. Couples the redox reaction to proton translocation (for every two electrons transferred, four hydrogen ions are translocated across the cytoplasmic membrane), and thus conserves the redox energy in a proton gradient. The protein is NADH-quinone oxidoreductase subunit N of Cupriavidus taiwanensis (strain DSM 17343 / BCRC 17206 / CCUG 44338 / CIP 107171 / LMG 19424 / R1) (Ralstonia taiwanensis (strain LMG 19424)).